Consider the following 1515-residue polypeptide: Adhesion G protein-coupled receptor L1 (1515 aa).

An N-terminal signal peptide occupies residues 1–24 (MARLAAALWSLCVTTVLVTSATQG). At 25-857 (LSRAGLPFGL…EIYQGRINEL (833 aa)) the chain is on the extracellular side. The SUEL-type lectin domain occupies 40–129 (ACEGYPIELR…KYLEVQYDCV (90 aa)). 5 disulfides stabilise this stretch: C41/C71, C50/C128, C83/C115, C96/C102, and C140/C322. E42 contacts alpha-L-rhamnose. An N-linked (GlcNAc...) asparagine glycan is attached at N98. 117 to 120 (GTYK) serves as a coordination point for alpha-L-rhamnose. Residues 139-398 (VCPGTLQKVL…VVRYSLEFGP (260 aa)) enclose the Olfactomedin-like domain. The interval 400–468 (DPSAGPATSP…APAPSTRRPP (69 aa)) is disordered. The segment covering 405–441 (PATSPPLSTTTTARPTPLTSTASPAATTPLRRAPLTT) has biased composition (low complexity). Over residues 453 to 468 (DLPPATAPAPSTRRPP) the composition is skewed to pro residues. 2 cysteine pairs are disulfide-bonded: C480–C515 and C503–C532. N531, N640, N741, N800, N805, and N826 each carry an N-linked (GlcNAc...) asparagine glycan. A GAIN-B domain is found at 669–850 (PARFLAAKQN…AVLMAHREIY (182 aa)). Intrachain disulfides connect C801/C832 and C820/C834. Residues 801–850 (CSFWNYSERSMLGYWSTQGCRLVESNKTHTTCACSHLTNFAVLMAHREIY) are GPS. Residues 858-878 (LLSVITWVGIVISLVCLAICI) form a helical membrane-spanning segment. Residues 879–892 (STFCFLRGLQTDRN) are Cytoplasmic-facing. The chain crosses the membrane as a helical span at residues 893-913 (TIHKNLCINLFLAELLFLVGI). Topologically, residues 914–919 (DKTQYE) are extracellular. Residues 920-940 (VACPIFAGLLHYFFLAAFSWL) form a helical membrane-spanning segment. Residues 941–964 (CLEGVHLYLLLVEVFESEYSRTKY) lie on the Cytoplasmic side of the membrane. Residues 965 to 985 (YYLGGYCFPALVVGIAAAIDY) form a helical membrane-spanning segment. Residues 986 to 1001 (RSYGTEKACWLRVDNY) lie on the Extracellular side of the membrane. A helical transmembrane segment spans residues 1002–1022 (FIWSFIGPVSFVIVVNLVFLM). Topologically, residues 1023-1049 (VTLHKMIRSSSVLKPDSSRLDNIKSWA) are cytoplasmic. Residues 1050–1070 (LGAIALLFLLGLTWAFGLLFI) form a helical membrane-spanning segment. Over 1071–1074 (NKES) the chain is Extracellular. A helical membrane pass occupies residues 1075 to 1095 (VVMAYLFTTFNAFQGVFIFVF). The Cytoplasmic portion of the chain corresponds to 1096–1515 (HCALQKKVHK…DGQMQLVTSL (420 aa)). Residues 1144-1184 (TQVPGQGRHIHQVSLGPRGRSALPESQKDPGGQSGPGDPLT) form a disordered region. At R1237 the chain carries Omega-N-methylarginine. Residue S1263 is modified to Phosphoserine. Disordered stretches follow at residues 1291–1316 (FNNS…RGRN), 1337–1369 (RGAS…PGGA), 1401–1470 (ESES…SRPP), and 1492–1515 (YLAA…VTSL). Composition is skewed to pro residues over residues 1345–1356 (GPPPEPPVPPVP) and 1449–1461 (ALPP…PGPP). Phosphoserine is present on residues S1497 and S1514.

Belongs to the G-protein coupled receptor 2 family. Adhesion G-protein coupled receptor (ADGR) subfamily. As to quaternary structure, forms a heterodimer, consisting of a large extracellular region (p120) non-covalently linked to a seven-transmembrane moiety (p85). Interacts with syntaxin and with proteins of the SHANK family via the PDZ domain. Isoform 2 interacts with TENM2. Interacts (via extracellular domain) with FLRT1, FLRT2 and FLRT3 (via extracellular domain). Autoproteolytically cleaved into 2 subunits, an extracellular subunit and a seven-transmembrane subunit. This proteolytic processing takes place early in the biosynthetic pathway, either in the endoplasmic reticulum or in the early compartment of the Golgi apparatus. As to expression, expressed in the brain (at protein level). Brain specific distribution but low levels are also detected in most tissues.

It is found in the cell membrane. The protein resides in the cell projection. It localises to the axon. Its subcellular location is the growth cone. The protein localises to the synapse. It is found in the presynaptic cell membrane. The protein resides in the synaptosome. In terms of biological role, calcium-independent receptor of high affinity for alpha-latrotoxin, an excitatory neurotoxin present in black widow spider venom which triggers massive exocytosis from neurons and neuroendocrine cells. Receptor probably implicated in the regulation of exocytosis. Functionally, receptor for TENM2 that mediates heterophilic synaptic cell-cell contact and postsynaptic specialization. This Rattus norvegicus (Rat) protein is Adhesion G protein-coupled receptor L1.